A 149-amino-acid polypeptide reads, in one-letter code: Large ribosomal subunit protein bL9 (149 aa).

The protein belongs to the bacterial ribosomal protein bL9 family.

Its function is as follows. Binds to the 23S rRNA. This Buchnera aphidicola subsp. Cinara cedri (strain Cc) protein is Large ribosomal subunit protein bL9.